The following is a 367-amino-acid chain: Epoxide hydrolase 3 (367 aa).

The helical transmembrane segment at 21-41 (GVFFWVLVYVAALLAAVSYIP) threads the bilayer. D173 (nucleophile) is an active-site residue. Y285 (proton donor) is an active-site residue. H340 (proton acceptor) is an active-site residue.

This sequence belongs to the AB hydrolase superfamily. Epoxide hydrolase family.

The protein resides in the microsome membrane. The enzyme catalyses an epoxide + H2O = an ethanediol. It catalyses the reaction 9,10-epoxyoctadecanoate + H2O = 9,10-dihydroxyoctadecanoate. The catalysed reaction is 9,10-epoxy-(12Z)-octadecenoate + H2O = 9,10-dihydroxy-(12Z)-octadecenoate. It carries out the reaction 8,9-epoxy-(5Z,11Z,14Z)-eicosatrienoate + H2O = 8,9-dihydroxy-(5Z,11Z,14Z)-eicosatrienoate. The enzyme catalyses 11,12-epoxy-(5Z,8Z,14Z)-eicosatrienoate + H2O = 11,12-dihydroxy-(5Z,8Z,14Z)-eicosatrienoate. It catalyses the reaction 14,15-epoxy-(5Z,8Z,11Z)-eicosatrienoate + H2O = 14,15-dihydroxy-(5Z,8Z,11Z)-eicosatrienoate. With respect to regulation, inhibited by 1-(1-acetylpiperidin-4-yl)-3-(4-(trifl uoromethoxy)phenyl)urea (TPAU), 1-cyclohexyl-3-dodecylurea (CDU), 12-(3-adamantan-1-yl-ureido)-dodecanoic acid (AUDA), 1-((3S, 5S, 7S)-adamantan-1-yl)-3-(5-(2-(2-ethoxyethoxy) ethoxy)pentyl)urea (AEPU) and to a lesser extent by 8-(3-((3S, 5S, 7S)-adamantan-1-yl)ureido) octanoic acid (AUOA). Catalyzes the hydrolysis of epoxide-containing fatty acids. Active in vitro against epoxyeicosatrienoic acids (EETs) including 8,9-EET, 9,10-EET, 11,12-EET and 14,15-EET and leukotoxin. The polypeptide is Epoxide hydrolase 3 (ephx3) (Xenopus tropicalis (Western clawed frog)).